The following is an 89-amino-acid chain: Small ribosomal subunit protein uS17A (89 aa).

It belongs to the universal ribosomal protein uS17 family. In terms of assembly, part of the 30S ribosomal subunit.

In terms of biological role, one of the primary rRNA binding proteins, it binds specifically to the 5'-end of 16S ribosomal RNA. This is Small ribosomal subunit protein uS17A from Bacteroides thetaiotaomicron (strain ATCC 29148 / DSM 2079 / JCM 5827 / CCUG 10774 / NCTC 10582 / VPI-5482 / E50).